The chain runs to 95 residues: MNVYDIIKKPVVTEKTELLRKEYNKYTFEVHPKANKIEIKKAVEAIFNVKVEDVATINKKPITKRHGMRLYKTQAKKKAIVKLAKENTITYSKEV.

The protein belongs to the universal ribosomal protein uL23 family. In terms of assembly, part of the 50S ribosomal subunit. Contacts protein L29, and trigger factor when it is bound to the ribosome.

Functionally, one of the early assembly proteins it binds 23S rRNA. One of the proteins that surrounds the polypeptide exit tunnel on the outside of the ribosome. Forms the main docking site for trigger factor binding to the ribosome. The chain is Large ribosomal subunit protein uL23 from Fusobacterium nucleatum subsp. nucleatum (strain ATCC 25586 / DSM 15643 / BCRC 10681 / CIP 101130 / JCM 8532 / KCTC 2640 / LMG 13131 / VPI 4355).